The following is a 309-amino-acid chain: Tyrosine recombinase XerD (309 aa).

The Core-binding (CB) domain occupies 3-88; it reads MRASLAIENF…ALRQFFRFLY (86 aa). Residues 109–302 enclose the Tyr recombinase domain; the sequence is PLPKIMSVEN…LEERLHKLVS (194 aa). Active-site residues include Arg-158, Lys-182, His-254, Arg-257, and His-280. The O-(3'-phospho-DNA)-tyrosine intermediate role is filled by Tyr-289.

Belongs to the 'phage' integrase family. XerD subfamily. As to quaternary structure, forms a cyclic heterotetrameric complex composed of two molecules of XerC and two molecules of XerD.

The protein resides in the cytoplasm. Site-specific tyrosine recombinase, which acts by catalyzing the cutting and rejoining of the recombining DNA molecules. The XerC-XerD complex is essential to convert dimers of the bacterial chromosome into monomers to permit their segregation at cell division. It also contributes to the segregational stability of plasmids. This is Tyrosine recombinase XerD from Brucella melitensis biotype 1 (strain ATCC 23456 / CCUG 17765 / NCTC 10094 / 16M).